Here is a 73-residue protein sequence, read N- to C-terminus: U-scoloptoxin(03)-Ssd1b (73 aa).

An N-terminal signal peptide occupies residues 1-23 (MKSSMAVLLVMGLIIFTLDKCYS).

Contains 3 disulfide bonds. Expressed by the venom gland.

The protein localises to the secreted. The sequence is that of U-scoloptoxin(03)-Ssd1b from Scolopendra dehaani (Thai centipede).